A 272-amino-acid chain; its full sequence is Replication-associated protein A (272 aa).

In terms of domain architecture, CRESS-DNA virus Rep endonuclease spans 11 to 114; the sequence is SHRNANTFLT…PLAVFERGTF (104 aa). An RCR-1 motif is present at residues 18–21; it reads FLTY. Positions 52, 60, and 62 each coordinate a divalent metal cation. An RCR-2 motif is present at residues 60 to 62; sequence HLH. Tyrosine 100 functions as the For DNA cleavage activity in the catalytic mechanism. The RCR-3 motif lies at 100–103; sequence YILK. Position 104 (glutamate 104) interacts with a divalent metal cation. Residues 175-187 are oligomerization; sequence SANKLFPEIQEEF. Positions 198 to 202 match the LXCXE motif, interaction with host RBR1 motif; that stretch reads LLCNE. Residues 245–272 are disordered; sequence SHQMKDQESRASTSSAQQEPENLLGPEA. Residues 254-264 show a composition bias toward polar residues; the sequence is RASTSSAQQEP.

Belongs to the geminiviridae Rep protein family. Homooligomer. Interacts (via LXCXE domain) with host retinoblastoma-related protein 1 (RBR1), and may thereby deregulate the host cell cycle. Part of the C- and V-complexes which are RepA-Rep-DNA complexes involved in the c-sense and v-sense transcription. Requires Mg(2+) as cofactor. The cofactor is Mn(2+).

The protein localises to the host nucleus. Its subcellular location is the host cytoplasm. Implicated in enhancement of V-sense gene expression. Acts a an inhibitor of C-sense gene transcription. This is Replication-associated protein A from Maize streak virus genotype A (isolate South Africa) (MSV).